A 102-amino-acid polypeptide reads, in one-letter code: FGNLSSAQAIMGNPRIRAHGKKVLTSLGLAVQNMDNLKETFAHLSELHCDKLHVDPENFKLLGNVLVIVLSTHFAKEFTPEVQAAWQKLVAGVANALSHKYH.

Positions F1 to H102 constitute a Globin domain. 2 residues coordinate heme b: H19 and H48.

Belongs to the globin family. As to quaternary structure, heterotetramer of two alpha chains and two beta chains.

In terms of biological role, this is an embryonic beta chain. The chain is Hemoglobin subunit beta-Z (HBBZ) from Mesocricetus auratus (Golden hamster).